The chain runs to 555 residues: Glucose-6-phosphate isomerase (555 aa).

Residues 169 to 170, 219 to 224, glutamine 364, glutamate 368, histidine 399, and lysine 521 each bind D-glucose 6-phosphate; these read GS and SKTFTT. Glutamate 368 functions as the Proton donor in the catalytic mechanism. Active-site residues include histidine 399 and lysine 521.

It belongs to the GPI family. In terms of assembly, homodimer.

The protein resides in the cytoplasm. Its subcellular location is the cytosol. It catalyses the reaction alpha-D-glucose 6-phosphate = beta-D-fructose 6-phosphate. Its pathway is carbohydrate degradation; glycolysis; D-glyceraldehyde 3-phosphate and glycerone phosphate from D-glucose: step 2/4. In terms of biological role, in the cytoplasm, catalyzes the conversion of glucose-6-phosphate to fructose-6-phosphate, the second step in glycolysis, and the reverse reaction during gluconeogenesis. In Eremothecium gossypii (strain ATCC 10895 / CBS 109.51 / FGSC 9923 / NRRL Y-1056) (Yeast), this protein is Glucose-6-phosphate isomerase (PGI1).